The chain runs to 93 residues: Putative septation protein SpoVG (93 aa).

The protein belongs to the SpoVG family.

Could be involved in septation. The sequence is that of Putative septation protein SpoVG from Treponema denticola (strain ATCC 35405 / DSM 14222 / CIP 103919 / JCM 8153 / KCTC 15104).